Consider the following 345-residue polypeptide: Microtubule-associated protein Jupiter (345 aa).

Residues 1–14 (MISNFDCTDNQASS) are compositionally biased toward polar residues. Residues 1–34 (MISNFDCTDNQASSKVLRPPGGGSSDIFGSEMPQ) form a disordered region. Phosphoserine is present on Ser-24. Position 35 is a phosphothreonine (Thr-35). Residues 78-87 (QKTVDSHNRL) are compositionally biased toward basic and acidic residues. Positions 78–100 (QKTVDSHNRLFGEPTRPITPGKN) are disordered. Thr-92 and Thr-96 each carry phosphothreonine. Phosphoserine occurs at positions 105, 134, and 145. Disordered regions lie at residues 127-241 (HYNG…QPHS) and 300-345 (EGNP…SGLW). Low complexity predominate over residues 132–145 (SGSVSSASSSVSSS). A compositionally biased stretch (polar residues) spans 146–164 (TENLKMNSGSRSVFRNMST). Over residues 177–191 (LCPPSPVRIEPPTPP) the composition is skewed to pro residues. Composition is skewed to polar residues over residues 212 to 226 (DNST…NEAC) and 315 to 326 (DYNQRQESSNAG).

Belongs to the MAP Jupiter family.

The protein localises to the nucleus. Its subcellular location is the cytoplasm. The protein resides in the cytoskeleton. It localises to the spindle. In terms of biological role, binds to all microtubule populations. The chain is Microtubule-associated protein Jupiter from Drosophila erecta (Fruit fly).